The sequence spans 150 residues: Large ribosomal subunit protein bL9 (150 aa).

The protein belongs to the bacterial ribosomal protein bL9 family.

Its function is as follows. Binds to the 23S rRNA. The protein is Large ribosomal subunit protein bL9 of Serratia proteamaculans (strain 568).